A 540-amino-acid polypeptide reads, in one-letter code: Glucose-6-phosphate isomerase (540 aa).

Catalysis depends on Glu-351, which acts as the Proton donor. Residues His-382 and Lys-506 contribute to the active site.

It belongs to the GPI family.

The protein localises to the cytoplasm. The enzyme catalyses alpha-D-glucose 6-phosphate = beta-D-fructose 6-phosphate. The protein operates within carbohydrate biosynthesis; gluconeogenesis. It functions in the pathway carbohydrate degradation; glycolysis; D-glyceraldehyde 3-phosphate and glycerone phosphate from D-glucose: step 2/4. Functionally, catalyzes the reversible isomerization of glucose-6-phosphate to fructose-6-phosphate. In Corynebacterium glutamicum (strain R), this protein is Glucose-6-phosphate isomerase.